The primary structure comprises 465 residues: Cysteine--tRNA ligase (465 aa).

C30 serves as a coordination point for Zn(2+). Positions 32-42 match the 'HIGH' region motif; it reads ITVYDYCHIGH. 3 residues coordinate Zn(2+): C214, H239, and E243. The 'KMSKS' region signature appears at 271–275; that stretch reads KMSKS. Residue K274 coordinates ATP.

Belongs to the class-I aminoacyl-tRNA synthetase family. As to quaternary structure, monomer. The cofactor is Zn(2+).

The protein resides in the cytoplasm. The catalysed reaction is tRNA(Cys) + L-cysteine + ATP = L-cysteinyl-tRNA(Cys) + AMP + diphosphate. In Burkholderia thailandensis (strain ATCC 700388 / DSM 13276 / CCUG 48851 / CIP 106301 / E264), this protein is Cysteine--tRNA ligase.